The primary structure comprises 175 residues: Bifunctional protein PyrR (175 aa).

Residues 40–41, arginine 85, 102–110, arginine 135, and valine 159 contribute to the substrate site; these read TR and DDVLYTGRT. The PRPP-binding motif lies at 98–110; the sequence is VIIIDDVLYTGRT.

This sequence belongs to the purine/pyrimidine phosphoribosyltransferase family. PyrR subfamily. Homodimer and homohexamer; in equilibrium.

It carries out the reaction UMP + diphosphate = 5-phospho-alpha-D-ribose 1-diphosphate + uracil. Functionally, regulates transcriptional attenuation of the pyrimidine nucleotide (pyr) operon by binding in a uridine-dependent manner to specific sites on pyr mRNA. This disrupts an antiterminator hairpin in the RNA and favors formation of a downstream transcription terminator, leading to a reduced expression of downstream genes. Also displays a weak uracil phosphoribosyltransferase activity which is not physiologically significant. The protein is Bifunctional protein PyrR of Staphylococcus saprophyticus subsp. saprophyticus (strain ATCC 15305 / DSM 20229 / NCIMB 8711 / NCTC 7292 / S-41).